Reading from the N-terminus, the 1379-residue chain is MEVLMAERINLVFHNKVLDRTAMKRLISRLIDHFGMAYTSHILDQVKTLGFQQATATSISLGIDDLLTIPSKGWLVQDAEQQSFIFEKYHHYGNVHAVEKLRQSIEIWYATSEYLRQEMNLNFRMTDPLNPVHLMYFSGARGNASQVHQLVGMRGLMSDPQGQMIDLPIQSNLREGLSLTEYIISCYGARKGVVDTAVRTSDAGYLTRRLVEVVQHIVVRRTDCGTARGISVSPHNGMMPERMFIQTLIGRVLADDIYIGPRCIATRNQNIGVGLVNRFLNFRAEPILIRTPLTCRSTSWICRLCYGRSPTHGDLVELGEAVGIIAGQSIGEPGTQLTLRTFHTGGVFTGGTAEHVRAPSNGKIRLNEDLVHPTRTRHGYPAFFCSIYLYVTIESQDILHHVKIPPKSFILVQNDQYVESEQVIAESRAGTSTFNYKEKVRKHIYSDSGGEMHWSTNVYHAPEFTYGNVHLLSKTSHLWILLGEPCHSSLVSTSIHRDQDQMSVQSLSVKRRSTSKLSETNDEANQEIASADFSGKKEDRIADFSDVNRSICTDHYNLVYPAILPILDENSSFFSNCLSKRRRNQFIIPLQSIQEHKNELMPCSSISMKTPPNANGIFWANSILAYFDDPRYRRNNSGSTKYGTLEMHSTVKKEDFIKYRGVNEFRQKMKVERFFFIPEEVHILPGSSSIMVRNHSLIGVDTQITLNLRSRVGGLVRVERKKKIIELKIFFGDIYFPGGADNISQHSGVLIPPGTERKTNYKESKKVKSWIDVQRITPSKKKFFVLVRPVVTYEIMDDITSATLFPPDLLQQRDNAQLRVVNYILHGTGKPIRGNYDTSIQLVRTCLVFKRNQDKKSYYSEAARASVVEIRTNYLIRHFLRIDFVKAPISYIGKRNDPLGLGLLADNGLDWTHKNPYSEARIHQNLNQNQGTIHTFLNRNKESQSLSILSSSNCSRMDPANGAKSNNVIQESKKEEYPILKISNSLGPLGTYPPIANCDSLNHLLTHNQILVTNYFKLDNVKPPFQVFKLKYYFIAENWKVCNYNPGSNLRLNVFDFHWNFLHHNSCAETSKIMSLGQFICQNVCIDKTRPPRKSGQVILVQVDSVVIRLAKPYLATPGATVHGLYGETFFGGDTVVTFNYEKSISGDITQGLPKVEQVLEVRSVDSISMNLEGRVEGWSKCITGILGIPWGFFIGAELTIVQSRISLVNKIQKVYRAQGVHIHNRHIEIIVRQITSKVLVSEDGMSNVFSPGELIGLLRAERTGRALEEPIHYRSVFLGITKASLNTQSFISEASFQETARVLSKAALGGRIDWLKGLKENVVLGGVIPAGTGFRGLVDPSKQYKTIPLKTNLFEGGMRDLLVHHRKLFDSFLNTSPS.

Residues Cys-224, Cys-295, Cys-302, and Cys-305 each coordinate Zn(2+). Residues 503–524 (SVQSLSVKRRSTSKLSETNDEA) are disordered.

This sequence belongs to the RNA polymerase beta' chain family. RpoC2 subfamily. In terms of assembly, in plastids the minimal PEP RNA polymerase catalytic core is composed of four subunits: alpha, beta, beta', and beta''. When a (nuclear-encoded) sigma factor is associated with the core the holoenzyme is formed, which can initiate transcription. Zn(2+) serves as cofactor.

It is found in the plastid. The enzyme catalyses RNA(n) + a ribonucleoside 5'-triphosphate = RNA(n+1) + diphosphate. Functionally, DNA-dependent RNA polymerase catalyzes the transcription of DNA into RNA using the four ribonucleoside triphosphates as substrates. The sequence is that of DNA-directed RNA polymerase subunit beta'' from Cuscuta exaltata (Tall dodder).